The chain runs to 359 residues: Alkanal monooxygenase alpha chain (359 aa).

The protein belongs to the bacterial luciferase oxidoreductase family. Heterodimer of an alpha and a beta chain.

It carries out the reaction a long-chain fatty aldehyde + FMNH2 + O2 = a long-chain fatty acid + hnu + FMN + H2O + 2 H(+). Its function is as follows. Light-emitting reaction in luminous bacteria. This chain is Alkanal monooxygenase alpha chain (luxA), found in Photorhabdus laumondii subsp. laumondii (strain DSM 15139 / CIP 105565 / TT01) (Photorhabdus luminescens subsp. laumondii).